Here is a 1379-residue protein sequence, read N- to C-terminus: Attractin-like protein 1 (1379 aa).

Positions 1 to 23 (METGGRARTGTPQPAAPGVWRAR) are disordered. A signal peptide spans 1-52 (METGGRARTGTPQPAAPGVWRARPAGGGGGGASSWLLDGNSWLLCYGFLYLA). The 39-residue stretch at 53 to 91 (LYAQVSQSKPCERTGSCFSGRCVNSTCLCDPGWVGDQCQ) folds into the EGF-like 1 domain. The Extracellular portion of the chain corresponds to 53-1230 (LYAQVSQSKP…FSQHNTIMDL (1178 aa)). 3 cysteine pairs are disulfide-bonded: cysteine 63–cysteine 79, cysteine 81–cysteine 90, and cysteine 93–cysteine 119. N-linked (GlcNAc...) asparagine glycosylation occurs at asparagine 76. Residues 93 to 209 (CQGRFKLTEP…TGFNIFYSIN (117 aa)) form the CUB domain. N-linked (GlcNAc...) asparagine glycosylation is found at asparagine 174 and asparagine 198. Positions 207-245 (SINSCPNNCSGHGKCTTSVSVPSQVYCECDKYWKGEACD) constitute an EGF-like 2 domain. Disulfide bonds link cysteine 211-cysteine 221, cysteine 215-cysteine 233, and cysteine 235-cysteine 244. 6 Kelch repeats span residues 316–365 (FMWV…LYQE), 367–415 (IFMY…EGHS), 427–475 (VMII…SVYD), 480–531 (SIYV…LING), 533–591 (MLIF…VING), and 592–638 (SMYI…WNKN). N-linked (GlcNAc...) asparagine glycosylation is present at asparagine 380. 3 PSI domains span residues 614–657 (NCKA…AKCP), 666–709 (RCYR…TKCH), and 715–760 (ICNK…DACL). The C-type lectin domain occupies 755 to 873 (IGDACLRVNS…TSMANGLVCE (119 aa)). N-linked (GlcNAc...) asparagine glycosylation is found at asparagine 763, asparagine 778, and asparagine 898. An intrachain disulfide couples cysteine 776 to cysteine 872. 2 PSI domains span residues 889–939 (PCSL…ATCS) and 942–1012 (NCSG…IQCP). Intrachain disulfides connect cysteine 1014–cysteine 1022, cysteine 1016–cysteine 1028, cysteine 1031–cysteine 1040, cysteine 1043–cysteine 1057, cysteine 1060–cysteine 1069, cysteine 1062–cysteine 1076, cysteine 1078–cysteine 1088, and cysteine 1091–cysteine 1106. Laminin EGF-like domains lie at 1014–1059 (CQCN…QCTA) and 1060–1108 (CTCS…TCYY). A glycan (N-linked (GlcNAc...) asparagine) is linked at asparagine 1157. The chain crosses the membrane as a helical span at residues 1231-1251 (VQFFVTFFSCFLSLLLVAAVV). Residues 1252–1379 (WKIKQTCWAS…HLSTRQGTCV (128 aa)) lie on the Cytoplasmic side of the membrane. The interval 1354 to 1379 (KASDSKDKTSGVRNRKHLSTRQGTCV) is disordered.

As to quaternary structure, interacts with MC4R.

The protein localises to the membrane. In terms of biological role, may play a role in melanocortin signaling pathways that regulate energy homeostasis. This chain is Attractin-like protein 1 (ATRNL1), found in Homo sapiens (Human).